Here is a 178-residue protein sequence, read N- to C-terminus: Ribosome maturation factor RimM (178 aa).

A PRC barrel domain is found at 101–178; that stretch reads DGEYYWYQLQ…EMQVDWDADF (78 aa).

This sequence belongs to the RimM family. In terms of assembly, binds ribosomal protein uS19.

The protein localises to the cytoplasm. In terms of biological role, an accessory protein needed during the final step in the assembly of 30S ribosomal subunit, possibly for assembly of the head region. Essential for efficient processing of 16S rRNA. May be needed both before and after RbfA during the maturation of 16S rRNA. It has affinity for free ribosomal 30S subunits but not for 70S ribosomes. This chain is Ribosome maturation factor RimM, found in Stutzerimonas stutzeri (strain A1501) (Pseudomonas stutzeri).